The sequence spans 196 residues: Imidazole glycerol phosphate synthase subunit HisH (196 aa).

A Glutamine amidotransferase type-1 domain is found at 2–196; it reads NVVIVDTECA…LKRFLELTLC (195 aa). The Nucleophile role is filled by Cys77. Residues His175 and Glu177 contribute to the active site.

Heterodimer of HisH and HisF.

The protein localises to the cytoplasm. The enzyme catalyses 5-[(5-phospho-1-deoxy-D-ribulos-1-ylimino)methylamino]-1-(5-phospho-beta-D-ribosyl)imidazole-4-carboxamide + L-glutamine = D-erythro-1-(imidazol-4-yl)glycerol 3-phosphate + 5-amino-1-(5-phospho-beta-D-ribosyl)imidazole-4-carboxamide + L-glutamate + H(+). It catalyses the reaction L-glutamine + H2O = L-glutamate + NH4(+). Its pathway is amino-acid biosynthesis; L-histidine biosynthesis; L-histidine from 5-phospho-alpha-D-ribose 1-diphosphate: step 5/9. IGPS catalyzes the conversion of PRFAR and glutamine to IGP, AICAR and glutamate. The HisH subunit catalyzes the hydrolysis of glutamine to glutamate and ammonia as part of the synthesis of IGP and AICAR. The resulting ammonia molecule is channeled to the active site of HisF. This chain is Imidazole glycerol phosphate synthase subunit HisH, found in Idiomarina loihiensis (strain ATCC BAA-735 / DSM 15497 / L2-TR).